The sequence spans 134 residues: Putative esterase PA0474 (134 aa).

It belongs to the thioesterase PaaI family.

In Pseudomonas aeruginosa (strain ATCC 15692 / DSM 22644 / CIP 104116 / JCM 14847 / LMG 12228 / 1C / PRS 101 / PAO1), this protein is Putative esterase PA0474.